A 66-amino-acid polypeptide reads, in one-letter code: SPbeta prophage-derived uncharacterized protein YopM (66 aa).

The sequence is that of SPbeta prophage-derived uncharacterized protein YopM (yopM) from Bacillus subtilis (strain 168).